Here is a 530-residue protein sequence, read N- to C-terminus: Cytochrome P450 monooxygenase apf7 (530 aa).

Residues 6–26 (VSPVSIWVFVIYAVTIIIAIY) form a helical membrane-spanning segment. N-linked (GlcNAc...) asparagine glycosylation occurs at Asn85. Cys464 is a binding site for heme.

It belongs to the cytochrome P450 family. Heme is required as a cofactor.

The protein localises to the membrane. It participates in secondary metabolite biosynthesis. In terms of biological role, cytochrome P450 monooxygenase; part of the gene cluster that mediates the biosynthesis of the cyclic tetrapeptide apicidin F (APF). The non-ribosomal peptide synthetase apf1 incorporates four different amino acids to produce apicidin F: L-phenylalanine, D-pipecolic acid (D-pip), N-methoxy-L-tryptophan and L-2-aminooctanedioic acid. L-Phenylalanine is the only proteinogenic amino acid directly used by apf1. The 3 other apf1 substrates are non-proteinogenic and have to be modified by other enzymes of the cluster. Lysine is converted to delta-1-pyrroline-5-carboxylate (P5C) which is reduced to L-pipecolic acid (L-pip) by apf3. L-pip is epimerized to D-pip, probably by apf1 activity, prior to incorporation. L-Tryptophan is N-oxidyzed by one of the cytochrome P450 monooxygenases (apf7 or apf8), and further methylated at the hydroxy group by the O-methyltransferase apf6 to yield N-methoxy-L-tryptophan. The synthesis of the fourth apf1 substrate is more complex. The fatty acid synthase apf5 is involved in the synthesis of the octanoic acid backbone of L-2-aminooctanedioic acid by fixing one acetyl-CoA unit and three malonyl-CoA units. Then one of the cytochrome P450 monooxygenases (apf7 or apf8) may oxidize this backbone to 2-oxooctanoic acid. The aminotransferase apf4 is predicted to catalyze the exchange of the keto group with an amino group. The next step would be the oxidation of 2-aminooctanoic acid by one of the cytochrome P450 monooxygenases (apf7 or apf8). The last step is the oxidation of 2-amino-8-hydroxyoctanoic acid to 2-aminooctanedioic acid is catalyzed by the FAD-dependent monooxygenase apf9. The chain is Cytochrome P450 monooxygenase apf7 from Gibberella fujikuroi (strain CBS 195.34 / IMI 58289 / NRRL A-6831) (Bakanae and foot rot disease fungus).